The sequence spans 197 residues: Ras-like protein rasB (197 aa).

Residue 13–20 (GGGGVGKS) participates in GTP binding. An Effector region motif is present at residues 35-43 (YDPTIEDSY). Residues 60–64 (DTAGQ) and 119–122 (NKCD) contribute to the GTP site. Cysteine 194 carries the cysteine methyl ester modification. A lipid anchor (S-geranylgeranyl cysteine) is attached at cysteine 194. A propeptide spans 195 to 197 (LIL) (removed in mature form).

This sequence belongs to the small GTPase superfamily. Ras family.

The protein resides in the cell membrane. The enzyme catalyses GTP + H2O = GDP + phosphate + H(+). With respect to regulation, alternates between an inactive form bound to GDP and an active form bound to GTP. Activated by a guanine nucleotide-exchange factor (GEF) and inactivated by a GTPase-activating protein (GAP). Functionally, ras proteins bind GDP/GTP and possess intrinsic GTPase activity. The polypeptide is Ras-like protein rasB (rasB) (Dictyostelium discoideum (Social amoeba)).